Reading from the N-terminus, the 426-residue chain is Tektin-1 (426 aa).

Coiled-coil stretches lie at residues 21–84, 268–307, and 339–383; these read KNQY…LEQL, LKET…LDQE, and KEVG…ENTI. The disordered stretch occupies residues 396–426; the sequence is SNPLRDGGDQGQWARACAPTPSAEDGTSHTD.

Belongs to the tektin family. Microtubule inner protein component of sperm flagellar doublet microtubules. Ubiquitinated, leading to its degradation. Deubiquitinated by USP16, promoting its stability.

The protein resides in the cytoplasm. The protein localises to the cytoskeleton. Its subcellular location is the cilium axoneme. It is found in the flagellum axoneme. Microtubule inner protein (MIP) part of the dynein-decorated doublet microtubules (DMTs) in cilia and flagellar axoneme. Forms filamentous polymers in the walls of ciliary and flagellar microtubules. The sequence is that of Tektin-1 (TEKT1) from Canis lupus familiaris (Dog).